We begin with the raw amino-acid sequence, 213 residues long: Adenylate kinase (213 aa).

10–15 (GSGKGT) is an ATP binding site. An NMP region spans residues 30-59 (SVGDLLRNIISSSSELGKKIKGTVESGNLI). Residues Arg36, 57–59 (NLI), 83–86 (GFPR), and Gln90 each bind AMP. Positions 125 to 160 (NRLACLDCKNIYSVSSFKSTTCAKCKSTRLEKRIDD) are LID. An ATP-binding site is contributed by Arg126. Residues Cys129 and Cys132 each coordinate Zn(2+). 135–136 (IY) contributes to the ATP binding site. Residues Cys146 and Cys149 each coordinate Zn(2+). The AMP site is built by Arg157 and Arg169. Residue Leu195 participates in ATP binding.

Belongs to the adenylate kinase family. As to quaternary structure, monomer.

It is found in the cytoplasm. It catalyses the reaction AMP + ATP = 2 ADP. It functions in the pathway purine metabolism; AMP biosynthesis via salvage pathway; AMP from ADP: step 1/1. Catalyzes the reversible transfer of the terminal phosphate group between ATP and AMP. Plays an important role in cellular energy homeostasis and in adenine nucleotide metabolism. This Wolbachia pipientis wMel protein is Adenylate kinase.